Here is a 485-residue protein sequence, read N- to C-terminus: D-alanine--D-alanyl carrier protein ligase (485 aa).

ATP is bound at residue 144–145; sequence TS. Aspartate 189 is a binding site for D-alanine. 284-289 provides a ligand contact to ATP; it reads NTYGPT. Valine 293 serves as a coordination point for D-alanine. Positions 365 and 473 each coordinate ATP. Position 473 (lysine 473) interacts with D-alanine.

The protein belongs to the ATP-dependent AMP-binding enzyme family. DltA subfamily.

It localises to the cytoplasm. The enzyme catalyses holo-[D-alanyl-carrier protein] + D-alanine + ATP = D-alanyl-[D-alanyl-carrier protein] + AMP + diphosphate. It participates in cell wall biogenesis; lipoteichoic acid biosynthesis. Functionally, catalyzes the first step in the D-alanylation of lipoteichoic acid (LTA), the activation of D-alanine and its transfer onto the D-alanyl carrier protein (Dcp) DltC. In an ATP-dependent two-step reaction, forms a high energy D-alanyl-AMP intermediate, followed by transfer of the D-alanyl residue as a thiol ester to the phosphopantheinyl prosthetic group of the Dcp. D-alanylation of LTA plays an important role in modulating the properties of the cell wall in Gram-positive bacteria, influencing the net charge of the cell wall. The protein is D-alanine--D-alanyl carrier protein ligase of Staphylococcus aureus (strain MRSA252).